The primary structure comprises 161 residues: Ribonuclease H (161 aa).

The RNase H type-1 domain maps to 5 to 149 (EKLAIAAATD…VDAIAVAFSK (145 aa)). Aspartate 14, glutamate 53, aspartate 78, and aspartate 141 together coordinate Mg(2+).

This sequence belongs to the RNase H family. In terms of assembly, monomer. Requires Mg(2+) as cofactor.

Its subcellular location is the cytoplasm. It catalyses the reaction Endonucleolytic cleavage to 5'-phosphomonoester.. Endonuclease that specifically degrades the RNA of RNA-DNA hybrids. This Prochlorococcus marinus (strain NATL1A) protein is Ribonuclease H.